Here is a 992-residue protein sequence, read N- to C-terminus: GATOR2 complex protein WDR59 (992 aa).

WD repeat units lie at residues 57 to 98, 103 to 143, 146 to 185, 189 to 229, 232 to 276, 278 to 318, and 319 to 362; these read QSKW…GEVG, GHTR…KPTV, SAVAGASQVKWNKKNANYLATSHDGDVRIWDKRKPSTAVE, AHLS…KYLN, PCQV…APVH, FVGH…RVDY, and QMQR…SLSH. Positions 343–373 are disordered; sequence PEPEKTPHPQDIDHQPSLSHGEEDAIKEDPP. Positions 344-373 are enriched in basic and acidic residues; sequence EPEKTPHPQDIDHQPSLSHGEEDAIKEDPP. In terms of domain architecture, RWD spans 393–494; the sequence is QEFSLINVQI…RQLVSCLESF (102 aa). S564 carries the post-translational modification Phosphoserine. One copy of the WD 8 repeat lies at 660 to 706; it reads KSLGELYILNVNDTQETCQKNATSAMLVGRKDLVQVWSLATVATDLC. A phosphoserine mark is found at S839, S840, and S848. Positions 849–870 are disordered; that stretch reads LTYSDPRERERDQHDKNKRLLD. Positions 853 to 869 are enriched in basic and acidic residues; sequence DPRERERDQHDKNKRLL. The C4-type zinc finger occupies 919–939; that stretch reads YCSHCRSEVRGTQCAICKGFT. Residues C920, C923, C932, C935, C945, C956, H961, H964, H967, C978, C982, C984, and C986 each coordinate Zn(2+). The RING-type; atypical zinc finger occupies 940-989; that stretch reads FQCAICHVAVRGSSNFCLTCGHGGHTSHMMEWFRTQEVCPTGCGCHCLLE.

This sequence belongs to the WD repeat WDR59 family. In terms of assembly, component of the GATOR2 subcomplex, composed of MIOS, SEC13, SEH1L, WDR24 and WDR59. The GATOR2 complex interacts with CASTOR1 and CASTOR2; the interaction is negatively regulated by arginine. The GATOR2 complex interacts with SESN1, SESN2 and SESN3; the interaction is negatively regulated by amino acids. Interacts with DDB1-CUL4A/B E3 ligase complexes.

The protein localises to the lysosome membrane. Its activity is regulated as follows. The GATOR2 complex is negatively regulated by the upstream amino acid sensors CASTOR1 and SESN2, which sequester the GATOR2 complex in absence of amino acids. In the presence of abundant amino acids, GATOR2 is released from CASTOR1 and SESN2 and activated. Functionally, as a component of the GATOR2 complex, functions as an activator of the amino acid-sensing branch of the mTORC1 signaling pathway. The GATOR2 complex indirectly activates mTORC1 through the inhibition of the GATOR1 subcomplex. GATOR2 probably acts as an E3 ubiquitin-protein ligase toward GATOR1. In the presence of abundant amino acids, the GATOR2 complex mediates ubiquitination of the NPRL2 core component of the GATOR1 complex, leading to GATOR1 inactivation. In the absence of amino acids, GATOR2 is inhibited, activating the GATOR1 complex. This chain is GATOR2 complex protein WDR59, found in Mus musculus (Mouse).